The following is a 1047-amino-acid chain: Rab11 family-interacting protein 3 (1047 aa).

3 disordered regions span residues 1 to 107 (MELC…WPQE), 311 to 335 (SHSC…DVSH), and 475 to 496 (PGPP…TAQE). The segment covering 64–73 (EPHAPSRWAK) has biased composition (basic and acidic residues). EF-hand domains follow at residues 496 to 531 (EEGA…YGAE) and 528 to 563 (YGAE…IRNG). Positions 509, 511, 513, 520, 541, 543, and 552 each coordinate Ca(2+). A phosphoserine mark is found at S641, S765, and S829. The stretch at 750-985 (EEDIADKVIF…NGQIITLSIQ (236 aa)) forms a coiled coil. Residues 775 to 879 (GEQHGRLRQE…MLDEIEELTQ (105 aa)) form an ARF-binding domain (ABD) region. The interval 882 to 906 (SEEQENKRKMGDRLSHERHQFQRDK) is disordered. Phosphoserine occurs at positions 938 and 939. The FIP-RBD domain occupies 985 to 1047 (QGAKSLFSTS…ETNPSILEVK (63 aa)).

Homodimer. Interacts with RAB11A; the interaction is direct and is required for the recruitment to endosomes. Interacts with RAB11B. Forms a ternary complex with RAB11A and dynein intermediate chain DYNC1LI1; RAB11FIP3 links RAB11A to dynein and the interaction regulates endocytic trafficking. Interacts with dynein intermediate chain and dynactin (DCTN1); the interaction activates dynein processivity. Interacts with ARF6 and EXOC7; the interaction serves for recruitment and tethering of recycling endosomes-derived vesicles to the cleavage furrow/midbody. Interacts with RACGAP1/MgcRacGAP; the interaction occurs at late telophase and is required for recruitment and tethering of recycling endosomes-derived vesicles to the cleavage furrow/midbody. Forms a complex with RAB11A and Rabin8/RAB3IP, probably a heterohexamer with two of each protein subunit, where RAB3IP and RAB11FIP3 simultaneously bind to RAB11A; the complex promotes preciliary trafficking. Forms a complex containing RAB11A, ASAP1, RAB3IP, RAP11FIP3 and ARF4; the complex promotes preciliary trafficking; the complex binds to RHO in photoreceptor cells and promotes RHO ciliary transport. Interacts with RAB11FIP4. Interacts with RAB25.

The protein resides in the recycling endosome membrane. The protein localises to the cytoplasm. Its subcellular location is the cytoskeleton. It localises to the microtubule organizing center. It is found in the centrosome. The protein resides in the cleavage furrow. The protein localises to the midbody. Its subcellular location is the golgi apparatus membrane. It localises to the golgi apparatus. It is found in the trans-Golgi network membrane. In terms of biological role, downstream effector molecule for Rab11 GTPase which is involved in endocytic trafficking, cytokinesis and intracellular ciliogenesis by participating in membrane delivery. Recruited by Rab11 to endosomes where it links Rab11 to dynein motor complex. The functional Rab11-RAB11FIP3-dynein complex regulates the movement of peripheral sorting endosomes (SE) along microtubule tracks toward the microtubule organizing center/centrosome, generating the endocytic recycling compartment (ERC) during interphase of cell cycle. Facilitates the interaction between dynein and dynactin and activates dynein processivity. Binding with ASAP1 is needed to regulate the pericentrosomal localization of recycling endosomes. The Rab11-RAB11FIP3 complex is also implicated in the transport during telophase of vesicles derived from recycling endosomes to the cleavage furrow via centrosome-anchored microtubules, where the vesicles function to deliver membrane during late cytokinesis and abscission. The recruitment of Rab11-RAB11FIP3-containing endosomes to the cleavage furrow and tethering to the midbody is co-mediated by RAB11FIP3 interaction with ARF6-exocyst and RACGAP1-MKLP1 tethering complexes. Also involved in the Rab11-Rabin8-Rab8 ciliogenesis cascade by facilitating the orderly assembly of a ciliary targeting complex containing Rab11, ASAP1, Rabin8/RAB3IP, RAB11FIP3 and ARF4, which directs preciliary vesicle trafficking to mother centriole and ciliogenesis initiation. Also promotes the activity of Rab11 and ASAP1 in the ARF4-dependent Golgi-to-cilia transport of the sensory receptor rhodopsin. Competes with WDR44 for binding to Rab11, which controls intracellular ciliogenesis pathway. May play a role in breast cancer cell motility by regulating actin cytoskeleton. This chain is Rab11 family-interacting protein 3, found in Mus musculus (Mouse).